Consider the following 494-residue polypeptide: Lysine--tRNA ligase (494 aa).

Residues E399 and E406 each coordinate Mg(2+).

This sequence belongs to the class-II aminoacyl-tRNA synthetase family. It depends on Mg(2+) as a cofactor.

It localises to the cytoplasm. The enzyme catalyses tRNA(Lys) + L-lysine + ATP = L-lysyl-tRNA(Lys) + AMP + diphosphate. The polypeptide is Lysine--tRNA ligase (lysS) (Saccharolobus solfataricus (strain ATCC 35092 / DSM 1617 / JCM 11322 / P2) (Sulfolobus solfataricus)).